Here is a 93-residue protein sequence, read N- to C-terminus: Large ribosomal subunit protein eL31 (93 aa).

This sequence belongs to the eukaryotic ribosomal protein eL31 family.

The sequence is that of Large ribosomal subunit protein eL31 from Methanosarcina mazei (strain ATCC BAA-159 / DSM 3647 / Goe1 / Go1 / JCM 11833 / OCM 88) (Methanosarcina frisia).